Here is a 525-residue protein sequence, read N- to C-terminus: Coronin-2A (525 aa).

WD repeat units lie at residues 80–120 (GHRG…LTKN), 130–170 (GHAR…SVIM), 178–217 (CHQD…VLQE), 220–263 (YKGH…VPVT), and 269–308 (GSSG…PHLN). A coiled-coil region spans residues 485–524 (QMFYRQQDEIRRLRELVTQREVQAKQLELEIRNLRMNSPR).

It belongs to the WD repeat coronin family. Binds actin. Component of the N-Cor repressor complex, at least composed of NCOR1, NCOR2, HDAC3, TBL1X, TBL1R, CORO2A and GPS2.

The polypeptide is Coronin-2A (CORO2A) (Bos taurus (Bovine)).